The chain runs to 690 residues: Highly divergent homeobox (690 aa).

Residues 3 to 63 constitute a DNA-binding region (homeobox 1); sequence LRSVFTVEQQ…NKRRKMSSKN (61 aa). 2 disordered regions span residues 55–76 and 112–132; these read KRRK…TSLS and SPAS…QITE. Positions 64-76 are enriched in low complexity; sequence SESGTATTGTSLS. A compositionally biased stretch (polar residues) spans 113-123; that stretch reads PASSSSRQGTN. Glycyl lysine isopeptide (Lys-Gly) (interchain with G-Cter in SUMO2) cross-links involve residues Lys-135, Lys-140, Lys-144, Lys-163, Lys-172, Lys-194, Lys-212, Lys-221, and Lys-232. The segment at residues 435–498 is a DNA-binding region (homeobox 2); the sequence is ALQDRTQFSD…NRRRKYRLMG (64 aa). The segment at 501–539 is disordered; the sequence is VPPPRGGPADFSEQPESGSLSALTPGEEAGPEVGEDNDR. A Glycyl lysine isopeptide (Lys-Gly) (interchain with G-Cter in SUMO2) cross-link involves residue Lys-613. The tract at residues 664–690 is disordered; the sequence is FNHASLEPDDTSFSVSSLSEKNVSESL. Positions 674–690 are enriched in polar residues; it reads TSFSVSSLSEKNVSESL.

It localises to the nucleus. This is Highly divergent homeobox (HDX) from Homo sapiens (Human).